A 558-amino-acid polypeptide reads, in one-letter code: MFVRMLVFRVLLLIALVGKSVIGLSLMSFIAPPDPDWTPDDYYYSYEQSSPDEDPSVTQTTPENPDWYYEDDDPCQSNPCEHGGDCIIRGDTFSCSCPAPFSGSRCQTAQNKCKDNPCVHGDCLITQKHPYYRCACKYPYTGPDCSKVLPACRPNPCQNGGVCSRHRRRSRFTCACPDQYKGKFCEIGPDDCYVGDGYSYRGKVSKTVNQNPCLYWNSHLLLQETYNMFMEDAETHGIAEHNFCRNPDGDHKPWCFVKVNSEKVKWEYCDVTVCPVPDTPNPVESLLEPVMELPGFESCGKTEVAEHAVKRIYGGFKSTAGKHPWQVSLQTSLPLTTSMPQGHFCGGALIHPCWVLTAAHCTDINTKHLKVVLGDQDLKKTESHEQTFRVEKILKYSQYNERDEIPHNDIALLKLKPVGGHCALESRYVKTVCLPSDPFPSGTECHISGWGVTETGEGSRQLLDAKVKLIANPLCNSRQLYDHTIDDSMICAGNLQKPGSDTCQGDSGGPLTCEKDGTYYVYGIVSWGQECGKKPGVYTQVTKFLNWIKTTMHREAGL.

An N-terminal signal peptide occupies residues 1–23; that stretch reads MFVRMLVFRVLLLIALVGKSVIG. EGF-like domains are found at residues 71–107, 109–146, and 148–186; these read DDDP…SRCQ, AQNK…PDCS, and VLPA…KFCE. 18 disulfides stabilise this stretch: Cys75-Cys86, Cys80-Cys95, Cys97-Cys106, Cys113-Cys123, Cys118-Cys134, Cys136-Cys145, Cys152-Cys163, Cys157-Cys174, Cys176-Cys185, Cys192-Cys274, Cys213-Cys255, Cys244-Cys269, Cys299-Cys433, Cys345-Cys361, Cys353-Cys422, Cys445-Cys513, Cys475-Cys491, and Cys503-Cys531. Residues 191-274 enclose the Kringle domain; sequence DCYVGDGYSY…KWEYCDVTVC (84 aa). Residues 312–553 enclose the Peptidase S1 domain; sequence IYGGFKSTAG…FLNWIKTTMH (242 aa). Catalysis depends on charge relay system residues His360 and Asp409. The active-site Charge relay system is the Ser507.

The protein belongs to the peptidase S1 family. Heterodimer; disulfide-linked. Heterodimer of a 50 kDa heavy and a 27 kDa light chain linked by a disulfide bond. In terms of processing, proteolytic cleavage at Gly-23 or Met-27 can give rise to the 50 kDa heavy chain (HC) and cleavage at Arg-311 or Lys-317 can give rise to the 27 kDa light chain (LC). The HC can undergo further proteolytic cleavage giving rise to a 26 kDa fragment. The LC can undergo further proteolytic cleavage at Arg-311 leading to a 17-kDa fragment and at Arg-478 leading to a 8-kDa fragment. As to expression, liver and kidney.

Its subcellular location is the secreted. Cleaves the alpha-chain at multiple sites and the beta-chain between 'Lys-53' and 'Lys-54' but not the gamma-chain of fibrinogen and therefore does not initiate the formation of the fibrin clot and does not cause the fibrinolysis directly. It does not cleave (activate) prothrombin and plasminogen but converts the inactive single chain urinary plasminogen activator (pro-urokinase) to the active two chain form. Activates coagulation factor VII. May function as a tumor suppressor negatively regulating cell proliferation and cell migration. In Mus musculus (Mouse), this protein is Factor VII-activating protease.